Here is a 244-residue protein sequence, read N- to C-terminus: ATP synthase subunit a (244 aa).

The next 7 membrane-spanning stretches (helical) occupy residues 20–40, 81–101, 113–133, 140–160, 176–196, 202–222, and 223–243; these read FFDI…VIVI, GILF…LNVM, QLLV…IWGF, FLNI…LVFI, LFAN…AAIY, FIGI…LGIA, and FLQA…IINL.

It belongs to the ATPase A chain family. F-type ATPases have 2 components, CF(1) - the catalytic core - and CF(0) - the membrane proton channel. CF(1) has five subunits: alpha(3), beta(3), gamma(1), delta(1), epsilon(1). CF(0) has three main subunits: a, b and c.

The protein resides in the mitochondrion inner membrane. Mitochondrial membrane ATP synthase (F(1)F(0) ATP synthase or Complex V) produces ATP from ADP in the presence of a proton gradient across the membrane which is generated by electron transport complexes of the respiratory chain. F-type ATPases consist of two structural domains, F(1) - containing the extramembraneous catalytic core and F(0) - containing the membrane proton channel, linked together by a central stalk and a peripheral stalk. During catalysis, ATP synthesis in the catalytic domain of F(1) is coupled via a rotary mechanism of the central stalk subunits to proton translocation. Key component of the proton channel; it may play a direct role in the translocation of protons across the membrane. This Dictyostelium discoideum (Social amoeba) protein is ATP synthase subunit a (atp6).